We begin with the raw amino-acid sequence, 447 residues long: N-succinylarginine dihydrolase (447 aa).

Substrate-binding positions include Gly19 to Ser28, Asn110, and His137 to Arg138. Glu174 is an active-site residue. Arg213 contacts substrate. His249 is an active-site residue. Substrate is bound by residues Asp251 and Asn362. Cys368 (nucleophile) is an active-site residue.

The protein belongs to the succinylarginine dihydrolase family. Homodimer.

It carries out the reaction N(2)-succinyl-L-arginine + 2 H2O + 2 H(+) = N(2)-succinyl-L-ornithine + 2 NH4(+) + CO2. Its pathway is amino-acid degradation; L-arginine degradation via AST pathway; L-glutamate and succinate from L-arginine: step 2/5. Catalyzes the hydrolysis of N(2)-succinylarginine into N(2)-succinylornithine, ammonia and CO(2). The polypeptide is N-succinylarginine dihydrolase (Nitrosospira multiformis (strain ATCC 25196 / NCIMB 11849 / C 71)).